Here is a 310-residue protein sequence, read N- to C-terminus: Phosphoribosylaminoimidazole-succinocarboxamide synthase (310 aa).

It belongs to the SAICAR synthetase family.

It carries out the reaction 5-amino-1-(5-phospho-D-ribosyl)imidazole-4-carboxylate + L-aspartate + ATP = (2S)-2-[5-amino-1-(5-phospho-beta-D-ribosyl)imidazole-4-carboxamido]succinate + ADP + phosphate + 2 H(+). The protein operates within purine metabolism; IMP biosynthesis via de novo pathway; 5-amino-1-(5-phospho-D-ribosyl)imidazole-4-carboxamide from 5-amino-1-(5-phospho-D-ribosyl)imidazole-4-carboxylate: step 1/2. The polypeptide is Phosphoribosylaminoimidazole-succinocarboxamide synthase (Dechloromonas aromatica (strain RCB)).